An 848-amino-acid polypeptide reads, in one-letter code: Neurofilament medium polypeptide (848 aa).

Positions 1–10 are enriched in polar residues; that stretch reads MSYTLDSLGN. The disordered stretch occupies residues 1 to 51; that stretch reads MSYTLDSLGNPSAYRRVTETRSSFSRVSGSPSSGFRSQSWSRGSPSTVSSS. Residue Ser2 is modified to N-acetylserine. Residues 2–102 form a head region; it reads SYTLDSLGNP…KLSRSNEKEQ (101 aa). Low complexity predominate over residues 21 to 44; the sequence is RSSFSRVSGSPSSGFRSQSWSRGS. Ser30 is modified (phosphoserine). An Omega-N-methylarginine modification is found at Arg42. A glycan (O-linked (GlcNAc) threonine) is linked at Thr47. Ser97 carries the post-translational modification Phosphoserine. The IF rod domain occupies 99-410; the sequence is EKEQLQGLND…KLLEGEETRF (312 aa). A coil 1A region spans residues 103–134; sequence LQGLNDRFAGYIEKVHYLEQQNKEIEAEIQAL. Residues 135–147 form a linker 1 region; the sequence is RQKQASHAQLGDA. The coil 1B stretch occupies residues 148-246; the sequence is YDQEIRELRA…EEEVADLLAQ (99 aa). At Ser224 the chain carries Phosphoserine. The interval 247-263 is linker 12; it reads IQASHITVERKDYLKTD. Positions 264-285 are coil 2A; sequence ISTALKEIRSQLECHSDQNMHQ. The segment at 286-289 is linker 2; it reads AEEW. Residues 290 to 410 form a coil 2B region; that stretch reads FKCRYAKLTE…KLLEGEETRF (121 aa). Tyr318 is modified (phosphotyrosine). Phosphoserine is present on residues Ser344, Ser416, and Ser428. The tract at residues 411 to 848 is tail; it reads STFSGSITGP…AIVKEVTQGD (438 aa). O-linked (GlcNAc) threonine glycosylation occurs at Thr430. A phosphoserine mark is found at Ser466 and Ser482. Positions 482–785 are disordered; the sequence is SAKEEKEEAE…GEDSSDDKVV (304 aa). Residues 488 to 498 show a composition bias toward acidic residues; sequence EEAEEKEEEPE. Over residues 499–509 the composition is skewed to basic and acidic residues; that stretch reads AEKSPVKSPEA. Residues Ser502 and Ser506 each carry the phosphoserine modification. Positions 510–533 are enriched in acidic residues; that stretch reads KEEEEEGEKEEEEEGQEEEEEEDE. Basic and acidic residues predominate over residues 534 to 553; sequence GVKSDQAEEGGSEKEGSSEK. 4 positions are modified to phosphoserine: Ser537, Ser545, Ser550, and Ser551. Positions 554 to 576 are enriched in acidic residues; sequence DEGEQEEEEGETEAEGEGEEAEA. Thr565 carries the phosphothreonine modification. Residues 577 to 604 show a composition bias toward basic and acidic residues; sequence KEEKKIEGKVEEVAVKEEIKVEKPEKAK. Residues Ser605 and Ser610 each carry the phosphoserine modification. Basic and acidic residues-rich tracts occupy residues 611-677 and 689-711; these read PVEE…KAVE and SLEKDTKEEKPQPQEKVKEKAEE. Thr642 bears the Phosphothreonine mark. Ser645, Ser669, Ser689, Ser715, Ser723, Ser753, and Ser769 each carry phosphoserine. Basic and acidic residues-rich tracts occupy residues 720–732 and 748–760; these read SDRSPQESKKEDI and TQEKGSGREEEKG. Residues 771–785 are compositionally biased toward basic and acidic residues; sequence AEEKKGEDSSDDKVV.

It belongs to the intermediate filament family. In terms of assembly, forms heterodimers with NEFL; which can further hetero-oligomerize (in vitro). Forms heterodimers with INA (in vitro). In terms of processing, there are a number of repeats of the tripeptide K-S-P, NFM is phosphorylated on a number of the serines in this motif. It is thought that phosphorylation of NFM results in the formation of interfilament cross bridges that are important in the maintenance of axonal caliber. Phosphorylation seems to play a major role in the functioning of the larger neurofilament polypeptides (NF-M and NF-H), the levels of phosphorylation being altered developmentally and coincidentally with a change in the neurofilament function. Post-translationally, phosphorylated in the head and rod regions by the PKC kinase PKN1, leading to the inhibition of polymerization. Expressed in the sciatic nerve (at protein level).

It localises to the cytoplasm. It is found in the cytoskeleton. The protein resides in the cell projection. The protein localises to the axon. In terms of biological role, neurofilaments usually contain three intermediate filament proteins: NEFL, NEFM, and NEFH which are involved in the maintenance of neuronal caliber. May additionally cooperate with the neuronal intermediate filament proteins PRPH and INA to form neuronal filamentous networks. The polypeptide is Neurofilament medium polypeptide (Nefm) (Mus musculus (Mouse)).